A 245-amino-acid chain; its full sequence is Heavy metal-associated isoprenylated plant protein 1 (245 aa).

Residues 28 to 92 enclose the HMA 1 domain; sequence PVHVVLKIDF…KLQKKSKKKV (65 aa). Residues C39 and C42 each coordinate a metal cation. Positions 91 to 113 are disordered; it reads KVELISPKPKKDTKENNEKKAND. Over residues 99–113 the composition is skewed to basic and acidic residues; sequence PKKDTKENNEKKAND. In terms of domain architecture, HMA 2 spans 121–188; it reads VTTVVLKVNC…KLKKTVQVVP (68 aa). Positions 132 and 135 each coordinate a metal cation. Cysteine methyl ester is present on C242. C242 carries S-farnesyl cysteine lipidation. The propeptide at 243–245 is removed in mature form; sequence SVM.

It belongs to the HIPP family.

In terms of biological role, heavy-metal-binding protein. This Arabidopsis thaliana (Mouse-ear cress) protein is Heavy metal-associated isoprenylated plant protein 1.